Consider the following 118-residue polypeptide: Large ribosomal subunit protein uL22 (118 aa).

It belongs to the universal ribosomal protein uL22 family. In terms of assembly, part of the 50S ribosomal subunit.

Functionally, this protein binds specifically to 23S rRNA; its binding is stimulated by other ribosomal proteins, e.g. L4, L17, and L20. It is important during the early stages of 50S assembly. It makes multiple contacts with different domains of the 23S rRNA in the assembled 50S subunit and ribosome. In terms of biological role, the globular domain of the protein is located near the polypeptide exit tunnel on the outside of the subunit, while an extended beta-hairpin is found that lines the wall of the exit tunnel in the center of the 70S ribosome. This is Large ribosomal subunit protein uL22 from Pediococcus pentosaceus (strain ATCC 25745 / CCUG 21536 / LMG 10740 / 183-1w).